The chain runs to 368 residues: POU domain, class 3, transcription factor 1 (368 aa).

Over residues 1-16 (MATTAQYIPRNNSLPS) the composition is skewed to polar residues. Disordered regions lie at residues 1–28 (MATTAQYIPRNNSLPSNPLMHPDSDRMH), 69–88 (TDWTSGTHIGQAEHNKASVQ), 100–134 (SHLVHQPTQNSHHGSWAPTTTHHLSPLSPASNGHQ), and 147–193 (SPQP…PSSD). A compositionally biased stretch (basic and acidic residues) spans 79 to 88 (QAEHNKASVQ). The segment covering 105 to 134 (QPTQNSHHGSWAPTTTHHLSPLSPASNGHQ) has biased composition (polar residues). The span at 155 to 170 (GLRDPLHDDAGSHDNQ) shows a compositional bias: basic and acidic residues. The POU-specific domain occupies 187-261 (EDAPSSDDLE…LLNKWLEETD (75 aa)). A DNA-binding region (homeobox) is located at residues 279 to 338 (KRKKRTSIEVGVKGALENHFLKCPKPSAHEITTLAGTLQLEKEVVRVWFCNRRQKEKRMT).

It belongs to the POU transcription factor family. Class-3 subfamily. In terms of tissue distribution, predominantly expressed in the embryonic and adult central nervous system.

It localises to the nucleus. Functionally, transcription factor that may play important roles in patterning the embryonic brain. Could directly respond to the reception of the sonic hedgehog (shh) signal. This chain is POU domain, class 3, transcription factor 1 (pou3f1), found in Danio rerio (Zebrafish).